A 313-amino-acid polypeptide reads, in one-letter code: Cytochrome c oxidase assembly protein COX18, mitochondrial (313 aa).

Residues 209–229 traverse the membrane as a helical segment; the sequence is SLPLDAAPMLIPIILGTVSMI. Residues 230-272 lie on the Mitochondrial matrix side of the membrane; it reads NVEYNGKTMQATAVGTSGITTATDTQSRTSQTVNSILTATRLS. The helical transmembrane segment at 273-293 threads the bilayer; the sequence is TIFLIGVSTQASVLLSLYWIT. Topologically, residues 294-313 are mitochondrial intermembrane; that stretch reads SQVYSLIQNRILDLLWPYQR.

This sequence belongs to the OXA1/ALB3/YidC family.

It localises to the mitochondrion inner membrane. Its function is as follows. Required for the insertion of integral membrane proteins into the mitochondrial inner membrane. Essential for the activity and assembly of cytochrome c oxidase. This is Cytochrome c oxidase assembly protein COX18, mitochondrial (COX18) from Kluyveromyces lactis (strain ATCC 8585 / CBS 2359 / DSM 70799 / NBRC 1267 / NRRL Y-1140 / WM37) (Yeast).